The chain runs to 106 residues: uncharacterized protein (106 aa).

The protein belongs to the csb family.

This is an uncharacterized protein from Dictyostelium discoideum (Social amoeba).